The sequence spans 186 residues: uncharacterized protein (186 aa).

The protein belongs to the geranylgeranyl reductase family. ChlP subfamily.

This is an uncharacterized protein from Methanosarcina barkeri.